An 80-amino-acid chain; its full sequence is MSNKGQLLQDPFLNTLRREHVPVSIYLVNGIKLQGQIESFDQYVVLLKNTVTQMVYKHAISTVVPARPVTIQQQDGEGGN.

The Sm domain occupies 10-69 (DPFLNTLRREHVPVSIYLVNGIKLQGQIESFDQYVVLLKNTVTQMVYKHAISTVVPARPV).

This sequence belongs to the Hfq family. Homohexamer.

RNA chaperone that binds small regulatory RNA (sRNAs) and mRNAs to facilitate mRNA translational regulation in response to envelope stress, environmental stress and changes in metabolite concentrations. Also binds with high specificity to tRNAs. This Azoarcus sp. (strain BH72) protein is RNA-binding protein Hfq.